A 158-amino-acid polypeptide reads, in one-letter code: Putative 8-oxo-dGTP diphosphatase YtkD (158 aa).

Positions 6 to 145 constitute a Nudix hydrolase domain; sequence DYYQNTVQLS…SFIMKDSVLP (140 aa). The Nudix box motif lies at 53–74; it reads GKVEPMECAEEAALREVKEETG. 2 residues coordinate Mg(2+): Glu-68 and Glu-72.

It belongs to the Nudix hydrolase family. Mg(2+) serves as cofactor.

It carries out the reaction 8-oxo-dGTP + H2O = 8-oxo-dGMP + diphosphate + H(+). With respect to regulation, not induced by oxidative damage (following treatment with paraquat or hydrogen peroxide). Not induced by mitomycin C. Not induced by sigma-B general stress inducers such as sodium chloride, ethanol or heat. Its function is as follows. Involved in the GO system responsible for removing an oxidatively damaged form of guanine (7,8-dihydro-8-oxoguanine, 8-oxo-dGTP) from DNA and the nucleotide pool. 8-oxo-dGTP is inserted opposite dA and dC residues of template DNA with almost equal efficiency thus leading to A.T to G.C transversions. Functions, in conjunction with MutT, to protect vegetatively growing cells from DNA-damaging agents such as H(2)O(2) or t-BHP (t-butylhydroperoxide). The 2 proteins do not however protect spores. According to PubMed:15576788, phosphohydrolase that catalyzes the hydrolysis of all common nucleoside triphosphates as well as of the mutagenic analog 8-oxo-dGTP. The high catalytic efficiency on dGTP is in contrast to results from PubMed:14761999. According to PubMed:14761999, catalyzes the hydrolysis of 8-oxo-dGTP with a specific activity 413 times higher than that exhibited against dGTP. Preferentially catalyzes the hydrolysis of 8-oxo-dGTP and 8-oxo-GTP. According to PubMed:15576788, hydrolyzes nucleoside triphosphates in a stepwise fashion through the diphosphate to the monophosphate, releasing two molecules of inorganic orthophosphate. The protein is Putative 8-oxo-dGTP diphosphatase YtkD (ytkD) of Bacillus subtilis (strain 168).